The following is a 194-amino-acid chain: Large ribosomal subunit protein uL6z/uL6y (194 aa).

At Thr75 the chain carries Phosphothreonine.

It belongs to the universal ribosomal protein uL6 family.

The protein is Large ribosomal subunit protein uL6z/uL6y (RPL9B) of Arabidopsis thaliana (Mouse-ear cress).